An 84-amino-acid polypeptide reads, in one-letter code: Putative membrane protein insertion efficiency factor (84 aa).

The disordered stretch occupies residues 63–84; it reads WGGSGYDPVPGADPEHDRRPRG. The span at 75–84 shows a compositional bias: basic and acidic residues; it reads DPEHDRRPRG.

This sequence belongs to the UPF0161 family.

The protein localises to the cell inner membrane. Could be involved in insertion of integral membrane proteins into the membrane. This is Putative membrane protein insertion efficiency factor from Cereibacter sphaeroides (strain ATCC 17025 / ATH 2.4.3) (Rhodobacter sphaeroides).